The following is a 244-amino-acid chain: Triosephosphate isomerase (244 aa).

A substrate-binding site is contributed by 8–10; that stretch reads NWK. The Electrophile role is filled by His93. Glu161 functions as the Proton acceptor in the catalytic mechanism. Substrate contacts are provided by residues Gly167, Ser206, and 227–228; that span reads GG.

Belongs to the triosephosphate isomerase family. As to quaternary structure, homodimer.

It is found in the cytoplasm. It carries out the reaction D-glyceraldehyde 3-phosphate = dihydroxyacetone phosphate. It participates in carbohydrate biosynthesis; gluconeogenesis. The protein operates within carbohydrate degradation; glycolysis; D-glyceraldehyde 3-phosphate from glycerone phosphate: step 1/1. Involved in the gluconeogenesis. Catalyzes stereospecifically the conversion of dihydroxyacetone phosphate (DHAP) to D-glyceraldehyde-3-phosphate (G3P). The protein is Triosephosphate isomerase of Deinococcus radiodurans (strain ATCC 13939 / DSM 20539 / JCM 16871 / CCUG 27074 / LMG 4051 / NBRC 15346 / NCIMB 9279 / VKM B-1422 / R1).